We begin with the raw amino-acid sequence, 466 residues long: Ribosome biogenesis protein YTM1 (466 aa).

The ubiquitin-like (UBL) domain stretch occupies residues 11–99 (IKIKFFTNEE…EAFLTLEYTR (89 aa)). A sufficient for interaction with ERB1 and association with 66S pre-ribosomes region spans residues 109 to 466 (SFNNDDWISS…QINKGSDIAK (358 aa)). WD repeat units lie at residues 124–163 (PTTKIVMSSQLSISQPKILSGSYDGIVRTYNMSGKVEKQY), 165–203 (GHSAPVKAVKWISPTRIVSAGNDRQVRLWKTSYEEIIDE), 219–258 (GHKAPVVDLAVDTQTNRILSAGYDQNIGFWSTNYKEMTSI), 296–336 (GHSE…CVDT), 338–377 (TTGYSLLSVLQLPQVNLIASGSSARHINLHDPRVTTTSDQ), 384–424 (GHTN…SLYT), and 431–466 (STNAKIFDVCWDDRIGIISGGEDKKLQINKGSDIAK).

It belongs to the WD repeat WDR12/YTM1 family. In terms of assembly, component of the NOP7 complex, composed of ERB1, NOP7 and YTM1. The complex is held together by ERB1, which interacts with NOP7 via its N-terminal domain and with YTM1 via a high-affinity interaction between the seven-bladed beta-propeller domains of the 2 proteins. The NOP7 complex associates with the 66S pre-ribosome. Interacts (via UBL domain) with MDN1 (via VWFA/MIDAS domain).

It localises to the nucleus. The protein localises to the nucleolus. Its subcellular location is the nucleoplasm. In terms of biological role, component of the NOP7 complex, which is required for maturation of the 25S and 5.8S ribosomal RNAs and formation of the 60S ribosome. The protein is Ribosome biogenesis protein YTM1 of Candida albicans (strain SC5314 / ATCC MYA-2876) (Yeast).